We begin with the raw amino-acid sequence, 360 residues long: Polyamine aminopropyltransferase 2 (360 aa).

Residues 68–299 (DIWDEISLKE…TDWGFHIAAN (232 aa)) enclose the PABS domain. Residue Gln-94 participates in S-methyl-5'-thioadenosine binding. Positions 123 and 147 each coordinate spermidine. S-methyl-5'-thioadenosine-binding positions include Asp-167 and 201 to 202 (DA). Asp-219 serves as the catalytic Proton acceptor.

Belongs to the spermidine/spermine synthase family. As to quaternary structure, homodimer or homotetramer.

It localises to the cytoplasm. It carries out the reaction S-adenosyl 3-(methylsulfanyl)propylamine + putrescine = S-methyl-5'-thioadenosine + spermidine + H(+). It functions in the pathway amine and polyamine biosynthesis; spermidine biosynthesis; spermidine from putrescine: step 1/1. Its function is as follows. Catalyzes the irreversible transfer of a propylamine group from the amino donor S-adenosylmethioninamine (decarboxy-AdoMet) to putrescine (1,4-diaminobutane) to yield spermidine. This chain is Polyamine aminopropyltransferase 2, found in Bacillus anthracis.